A 258-amino-acid polypeptide reads, in one-letter code: Trypsin (258 aa).

An N-terminal signal peptide occupies residues 1 to 16; that stretch reads MIRFTLALAVIGVTFA. The propeptide at 17 to 29 is activation peptide; sequence ASTPQIETNPNLE. Residues 30-257 enclose the Peptidase S1 domain; it reads IIGGHDANII…FRDWINEETE (228 aa). The cysteines at positions 55 and 71 are disulfide-linked. Catalysis depends on histidine 70, which acts as the Charge relay system. N-linked (GlcNAc...) asparagine glycosylation occurs at asparagine 110. The active-site Charge relay system is the aspartate 117. Residues asparagine 130 and asparagine 188 are each glycosylated (N-linked (GlcNAc...) asparagine). Cystine bridges form between cysteine 182/cysteine 197 and cysteine 209/cysteine 233. The active-site Charge relay system is serine 213.

Belongs to the peptidase S1 family. In terms of tissue distribution, expressed in larval carcasses and gut, and adult gut.

The protein resides in the secreted. It catalyses the reaction Preferential cleavage: Arg-|-Xaa, Lys-|-Xaa.. The sequence is that of Trypsin from Phaedon cochleariae (Mustard beetle).